The primary structure comprises 101 residues: Small ribosomal subunit protein uS10 (101 aa).

This sequence belongs to the universal ribosomal protein uS10 family. Part of the 30S ribosomal subunit.

Functionally, involved in the binding of tRNA to the ribosomes. In Amoebophilus asiaticus (strain 5a2), this protein is Small ribosomal subunit protein uS10.